Consider the following 74-residue polypeptide: Putative protein YozX (74 aa).

The protein is Putative protein YozX (yozX) of Bacillus subtilis (strain 168).